Consider the following 488-residue polypeptide: MSQSVESRTRIKSERYESGVIPYAKMGYWDADYVIKDTDVLALFRITPQPGVDPIEASAAIAGESSTATWTVVWTDLLTACDLYRAKAYRVDPVPNVADQYFAYIAYDIDLFEEGSIANLTASIIGNVFGFKAVKALRLEDMRMPVAYLKTFQGPATGLIVERERMDKFGRPFLGATVKPKLGLSGKNYGRVVYEGLKGGLDFLKDDENINSQPFMRWRERYLYSMEGVNKASAAAGELKGHYLNVTAATMEDMYERAEFSKVVGSVICMIDLVIGYTAIQSMAIWARKNDMILHLHRAGNSTYSRQKNHGMNFRVICKWMRMAGVDHIHAGTVVGKLEGDPLMIKGFYNTLLESETDINLPQGLFFAQNWASLRKVVPVASGGIHAGQMHQLLDYLGDDVVLQFGGGTIGHPDGIQAGATANRVALESMVMARNEGRDYVAEGPQILRDAAKTCGPLQTALDLWKDISFNYTSTDTADFVETPTANV.

Residues Asn-127 and Thr-177 each coordinate substrate. Residue Lys-179 is the Proton acceptor of the active site. Position 181 (Lys-181) interacts with substrate. 3 residues coordinate Mg(2+): Lys-205, Asp-207, and Glu-208. At Lys-205 the chain carries N6-carboxylysine. Catalysis depends on His-297, which acts as the Proton acceptor. Substrate-binding residues include Arg-298, His-330, and Ser-382.

This sequence belongs to the RuBisCO large chain family. Type I subfamily. As to quaternary structure, heterohexadecamer of 8 large chains and 8 small chains. Mg(2+) is required as a cofactor.

It is found in the plastid. Its subcellular location is the chloroplast. The catalysed reaction is 2 (2R)-3-phosphoglycerate + 2 H(+) = D-ribulose 1,5-bisphosphate + CO2 + H2O. It carries out the reaction D-ribulose 1,5-bisphosphate + O2 = 2-phosphoglycolate + (2R)-3-phosphoglycerate + 2 H(+). Functionally, ruBisCO catalyzes two reactions: the carboxylation of D-ribulose 1,5-bisphosphate, the primary event in carbon dioxide fixation, as well as the oxidative fragmentation of the pentose substrate in the photorespiration process. Both reactions occur simultaneously and in competition at the same active site. This is Ribulose bisphosphate carboxylase large chain (rbcL) from Porphyra umbilicalis (Purple laver).